The sequence spans 99 residues: Large ribosomal subunit protein uL23 (99 aa).

Belongs to the universal ribosomal protein uL23 family. In terms of assembly, part of the 50S ribosomal subunit. Contacts protein L29, and trigger factor when it is bound to the ribosome.

In terms of biological role, one of the early assembly proteins it binds 23S rRNA. One of the proteins that surrounds the polypeptide exit tunnel on the outside of the ribosome. Forms the main docking site for trigger factor binding to the ribosome. This chain is Large ribosomal subunit protein uL23, found in Azotobacter vinelandii (strain DJ / ATCC BAA-1303).